Consider the following 557-residue polypeptide: Arginine--tRNA ligase (557 aa).

The short motif at 132 to 142 (ANPTGDLHLGH) is the 'HIGH' region element.

The protein belongs to the class-I aminoacyl-tRNA synthetase family. In terms of assembly, monomer.

It localises to the cytoplasm. The catalysed reaction is tRNA(Arg) + L-arginine + ATP = L-arginyl-tRNA(Arg) + AMP + diphosphate. This is Arginine--tRNA ligase from Bacillus pumilus (strain SAFR-032).